The following is a 230-amino-acid chain: Ribulose-phosphate 3-epimerase (230 aa).

A substrate-binding site is contributed by S10. A divalent metal cation-binding residues include H35, D37, and H68. The active-site Proton acceptor is D37. Substrate-binding positions include H68, 146–149, 179–181, and 201–202; these read GFGG, DGG, and GS. D179 is a binding site for a divalent metal cation. D179 serves as the catalytic Proton donor.

Belongs to the ribulose-phosphate 3-epimerase family. Homohexamer. A divalent metal cation serves as cofactor.

It carries out the reaction D-ribulose 5-phosphate = D-xylulose 5-phosphate. It participates in carbohydrate degradation. In terms of biological role, catalyzes the reversible epimerization of D-ribulose 5-phosphate to D-xylulose 5-phosphate. The polypeptide is Ribulose-phosphate 3-epimerase (Synechocystis sp. (strain ATCC 27184 / PCC 6803 / Kazusa)).